Reading from the N-terminus, the 218-residue chain is Glutathione S-transferase A (218 aa).

The residue at position 1 (Ser1) is an N-acetylserine. The region spanning 2–82 (GKPVLHYFNV…YIATKYNLYG (81 aa)) is the GST N-terminal domain. N6-succinyllysine is present on Lys3. Glutathione-binding positions include Tyr8, Lys44, 53-54 (QV), and 66-67 (QS). In terms of domain architecture, GST C-terminal spans 84–206 (DTKERLLIDM…LQPGSQRKPF (123 aa)).

Belongs to the GST superfamily. Alpha family. Homodimer or heterodimer of GSTA1 and GSTA2.

It localises to the cytoplasm. The enzyme catalyses RX + glutathione = an S-substituted glutathione + a halide anion + H(+). It catalyses the reaction prostaglandin A2 + glutathione = prostaglandin A2-S-(R)-glutathione. It carries out the reaction prostaglandin J2 + glutathione = prostaglandin J2-S-(R)-glutathione. The catalysed reaction is (13S)-hydroperoxy-(9Z,11E)-octadecadienoate + 2 glutathione = (13S)-hydroxy-(9Z,11E)-octadecadienoate + glutathione disulfide + H2O. The enzyme catalyses androst-5-ene-3,17-dione = androst-4-ene-3,17-dione. Functionally, glutathione S-transferase that catalyzes the nucleophilic attack of the sulfur atom of glutathione on the electrophilic groups of a wide range of exogenous and endogenous compounds. Involved in the formation of glutathione conjugates of both prostaglandin A2 (PGA2) and prostaglandin J2 (PGJ2). It also catalyzes the isomerization of D5-androstene-3,17-dione (AD) into D4-androstene-3,17-dione and may therefore play an important role in hormone biosynthesis. Through its glutathione-dependent peroxidase activity toward the fatty acid hydroperoxide (13S)-hydroperoxy-(9Z,11E)-octadecadienoate/13-HPODE it is also involved in the metabolism of oxidized linoleic acid. The polypeptide is Glutathione S-transferase A (Cavia porcellus (Guinea pig)).